Consider the following 326-residue polypeptide: Transcription factor bHLH143 (326 aa).

Over residues 175–189 (SDDDDNDDWESDDEV) the composition is skewed to acidic residues. Disordered regions lie at residues 175 to 194 (SDDD…STGH) and 234 to 275 (RDSS…EQSR). Positions 255 to 271 (PESNISSKQETGSGLSD) are enriched in polar residues. One can recognise a bHLH domain in the interval 263–312 (QETGSGLSDEQSRKDKIHTALRILESVVPGAKGKEALLLLDEAIDYLKLL).

As to quaternary structure, homodimer.

The protein localises to the nucleus. The chain is Transcription factor bHLH143 (BHLH143) from Arabidopsis thaliana (Mouse-ear cress).